The primary structure comprises 127 residues: 3-aminoacrylate deaminase RutC (127 aa).

The protein belongs to the RutC family.

It catalyses the reaction (Z)-3-aminoacrylate + H2O + H(+) = 3-oxopropanoate + NH4(+). Functionally, involved in pyrimidine catabolism. Catalyzes the deamination of 3-aminoacrylate to malonic semialdehyde, a reaction that can also occur spontaneously. RutC may facilitate the reaction and modulate the metabolic fitness, rather than catalyzing essential functions. The protein is 3-aminoacrylate deaminase RutC of Pseudomonas savastanoi pv. phaseolicola (strain 1448A / Race 6) (Pseudomonas syringae pv. phaseolicola (strain 1448A / Race 6)).